The sequence spans 235 residues: UDP-2,3-diacylglucosamine hydrolase (235 aa).

Mn(2+)-binding residues include Asp-9, His-11, Asp-42, Asn-80, and His-115. 80 to 81 (NR) is a substrate binding site. Substrate is bound by residues Asp-123, Ser-161, Lys-165, Lys-168, and His-196. Mn(2+) is bound by residues His-196 and His-198.

Belongs to the LpxH family. The cofactor is Mn(2+).

It is found in the cell inner membrane. The catalysed reaction is UDP-2-N,3-O-bis[(3R)-3-hydroxytetradecanoyl]-alpha-D-glucosamine + H2O = 2-N,3-O-bis[(3R)-3-hydroxytetradecanoyl]-alpha-D-glucosaminyl 1-phosphate + UMP + 2 H(+). It functions in the pathway glycolipid biosynthesis; lipid IV(A) biosynthesis; lipid IV(A) from (3R)-3-hydroxytetradecanoyl-[acyl-carrier-protein] and UDP-N-acetyl-alpha-D-glucosamine: step 4/6. Functionally, hydrolyzes the pyrophosphate bond of UDP-2,3-diacylglucosamine to yield 2,3-diacylglucosamine 1-phosphate (lipid X) and UMP by catalyzing the attack of water at the alpha-P atom. Involved in the biosynthesis of lipid A, a phosphorylated glycolipid that anchors the lipopolysaccharide to the outer membrane of the cell. The sequence is that of UDP-2,3-diacylglucosamine hydrolase from Actinobacillus succinogenes (strain ATCC 55618 / DSM 22257 / CCUG 43843 / 130Z).